The sequence spans 444 residues: N-succinylarginine dihydrolase (444 aa).

Substrate is bound by residues 19 to 28, asparagine 110, and 137 to 138; these read SGLSVGNIAS and HR. The active site involves glutamate 174. A substrate-binding site is contributed by arginine 214. Histidine 250 is a catalytic residue. Substrate is bound by residues aspartate 252 and asparagine 362. The active-site Nucleophile is the cysteine 368.

This sequence belongs to the succinylarginine dihydrolase family. Homodimer.

It carries out the reaction N(2)-succinyl-L-arginine + 2 H2O + 2 H(+) = N(2)-succinyl-L-ornithine + 2 NH4(+) + CO2. Its pathway is amino-acid degradation; L-arginine degradation via AST pathway; L-glutamate and succinate from L-arginine: step 2/5. Its function is as follows. Catalyzes the hydrolysis of N(2)-succinylarginine into N(2)-succinylornithine, ammonia and CO(2). The sequence is that of N-succinylarginine dihydrolase from Aliivibrio fischeri (strain ATCC 700601 / ES114) (Vibrio fischeri).